The chain runs to 147 residues: Hemoglobin subunit beta-H1 (147 aa).

Residues 3-147 (HFTAEEKAAI…VANALSHKYH (145 aa)) form the Globin domain. The heme b site is built by His-64 and His-93.

This sequence belongs to the globin family. Heterotetramer of two alpha chains and two beta chains. In terms of tissue distribution, red blood cells.

In terms of biological role, this is an embryonic beta-type chain. The chain is Hemoglobin subunit beta-H1 (Hbb-bh1) from Mus musculus (Mouse).